A 258-amino-acid chain; its full sequence is Tropinone reductase-like 3 (258 aa).

Residue 19–43 (IVTASTQGIGFAIAYRLGLEGAAVV) participates in NAD(+) binding. Position 150 (S150) interacts with substrate. Y163 (proton acceptor) is an active-site residue.

The protein belongs to the short-chain dehydrogenases/reductases (SDR) family.

In terms of biological role, has no tropinone reductase activity. This is Tropinone reductase-like 3 from Erythroxylum coca (Coca plant).